The following is a 385-amino-acid chain: Acetate kinase (385 aa).

Asn-9 is a Mg(2+) binding site. Lys-16 lines the ATP pocket. Substrate is bound at residue Arg-87. Asp-144 functions as the Proton donor/acceptor in the catalytic mechanism. Residues 202–206 (HLGSG) and 277–279 (DIR) contribute to the ATP site. Glu-373 is a binding site for Mg(2+).

This sequence belongs to the acetokinase family. In terms of assembly, homodimer. The cofactor is Mg(2+). Mn(2+) is required as a cofactor.

It localises to the cytoplasm. It carries out the reaction acetate + ATP = acetyl phosphate + ADP. Its pathway is metabolic intermediate biosynthesis; acetyl-CoA biosynthesis; acetyl-CoA from acetate: step 1/2. In terms of biological role, catalyzes the formation of acetyl phosphate from acetate and ATP. Can also catalyze the reverse reaction. The polypeptide is Acetate kinase (Rickettsia akari (strain Hartford)).